A 92-amino-acid polypeptide reads, in one-letter code: Small ribosomal subunit protein uS19c (92 aa).

The protein belongs to the universal ribosomal protein uS19 family.

The protein localises to the plastid. The protein resides in the chloroplast. In terms of biological role, protein S19 forms a complex with S13 that binds strongly to the 16S ribosomal RNA. This chain is Small ribosomal subunit protein uS19c, found in Huperzia lucidula (Shining clubmoss).